The sequence spans 236 residues: Serine/arginine-rich SC35-like splicing factor SCL28 (236 aa).

Disordered regions lie at residues 1–53 (MARA…LIRN) and 124–219 (EENR…RVLT). Residues 14–43 (RPRDRSPPRERKGYDDNRLRERPSSRDHES) are compositionally biased toward basic and acidic residues. One can recognise an RRM domain in the interval 47–125 (SGLLIRNLPL…REIAIVFAEE (79 aa)). Over residues 149–176 (TSHRSPRRRYRSHSRSRSPPRRESRHSK) the composition is skewed to basic residues. Ser184 bears the Phosphoserine mark. Positions 199–217 (RNEREYKSRNCRSPREERV) are enriched in basic and acidic residues.

The protein belongs to the splicing factor SR family. SCL subfamily. Component of the spliceosome. Interacts with RS2Z33, CYP59, CYP63 and CYP95.

It is found in the nucleus speckle. Its function is as follows. Involved in intron recognition and spliceosome assembly. Probably active at the 5' splice sites. The sequence is that of Serine/arginine-rich SC35-like splicing factor SCL28 (SCL28) from Arabidopsis thaliana (Mouse-ear cress).